Here is a 32-residue protein sequence, read N- to C-terminus: Ferredoxin (32 aa).

The 2Fe-2S ferredoxin-type domain maps to 3 to 32 (YKVRLLSEAEGIDVTIDCADDVYILDAAEE).

The protein belongs to the 2Fe2S plant-type ferredoxin family. The cofactor is [2Fe-2S] cluster.

The protein resides in the plastid. Its subcellular location is the chloroplast. In terms of biological role, ferredoxins are iron-sulfur proteins that transfer electrons in a wide variety of metabolic reactions. This Porphyridium purpureum (Red alga) protein is Ferredoxin.